Reading from the N-terminus, the 240-residue chain is Homeobox-leucine zipper protein HOX14 (240 aa).

The interval 26 to 64 (SGEVQGERPRARRRRRRGARCVGGGGGGGEVDGGDPKKR) is disordered. Over residues 35–44 (RARRRRRRGA) the composition is skewed to basic residues. The segment covering 46–56 (CVGGGGGGGEV) has biased composition (gly residues). Positions 59-118 (GDPKKRRLSDEQVEMLELSFREERKLETGRKVHLASELGLDPKQVAVWFQNRRARHKSKL) form a DNA-binding region, homeobox. Positions 108–167 (QNRRARHKSKLLEEEFSKLKHAHDAAILHKCHLENEVLRLKERLVVAEEEVRRLRSAAGS) form a coiled coil.

The protein belongs to the HD-ZIP homeobox family. Class I subfamily. Expressed in roots, stems, leaf blades and panicles.

Its subcellular location is the nucleus. In terms of biological role, probable transcription factor. The chain is Homeobox-leucine zipper protein HOX14 (HOX14) from Oryza sativa subsp. japonica (Rice).